Reading from the N-terminus, the 434-residue chain is Xylose isomerase (434 aa).

Active-site residues include His-100 and Asp-103. Residues Glu-231, Glu-267, His-270, Asp-295, Asp-306, Asp-308, and Asp-338 each contribute to the Mg(2+) site.

The protein belongs to the xylose isomerase family. As to quaternary structure, homotetramer. The cofactor is Mg(2+).

Its subcellular location is the cytoplasm. The catalysed reaction is alpha-D-xylose = alpha-D-xylulofuranose. The chain is Xylose isomerase from Ruegeria pomeroyi (strain ATCC 700808 / DSM 15171 / DSS-3) (Silicibacter pomeroyi).